We begin with the raw amino-acid sequence, 166 residues long: Regulatory protein RecX (166 aa).

It belongs to the RecX family.

Its subcellular location is the cytoplasm. Functionally, modulates RecA activity. The sequence is that of Regulatory protein RecX from Salmonella agona (strain SL483).